Here is a 558-residue protein sequence, read N- to C-terminus: MARVEL domain-containing protein 2 (558 aa).

The segment covering 1–16 has biased composition (basic and acidic residues); sequence MSNDGRSRNRDRRYDE. Disordered regions lie at residues 1–58 and 115–145; these read MSND…PPFG and CSPPASPARPNHRSPLNSCKDPYGGSEGTFS. Topologically, residues 1-194 are cytoplasmic; that stretch reads MSNDGRSRNR…YMKSWAGLLR (194 aa). Pro residues predominate over residues 45 to 58; the sequence is PLPPPPLPLQPPFG. S116, S120, and S161 each carry phosphoserine. Residue T166 is modified to Phosphothreonine. Residues 188 to 367 enclose the MARVEL domain; that stretch reads SWAGLLRILG…SALVCLKLWR (180 aa). A helical membrane pass occupies residues 195–215; sequence ILGVVELLLGAGVFACVTAYI. The Extracellular segment spans residues 216-223; the sequence is HKDSEWYN. Residues 224–244 traverse the membrane as a helical segment; the sequence is LFGYSQPYGMGGVGGLGSMYG. Residues 245 to 254 are Cytoplasmic-facing; the sequence is GYYYTGPKTP. Residues 255 to 275 traverse the membrane as a helical segment; it reads FVLVVAGLAWITTIIILVLGM. Topologically, residues 276–291 are extracellular; sequence SMYYRTILLDSNWWPL. Residues 292–312 form a helical membrane-spanning segment; that stretch reads TEFGINVALFILYMAAAIVYV. At 313–319 the chain is on the cytoplasmic side; it reads NDTNRGG. Residues 320–337 form a helical membrane-spanning segment; that stretch reads LCYYPLFNTPVNAVFCRV. At 338–341 the chain is on the extracellular side; the sequence is EGGQ. The helical transmembrane segment at 342-362 threads the bilayer; that stretch reads IAAMIFLFVTMIVYLISALVC. The Cytoplasmic segment spans residues 363 to 558; that stretch reads LKLWRHEAAR…VMNWDVQGYS (196 aa). S387 carries the phosphoserine modification. A Glycyl lysine isopeptide (Lys-Gly) (interchain with G-Cter in ubiquitin) cross-link involves residue K412. The stretch at 439–548 forms a coiled coil; that stretch reads MPDYVAKYPV…IKQRIQEYDK (110 aa). The OCEL domain maps to 440 to 551; it reads PDYVAKYPVI…RIQEYDKVMN (112 aa).

This sequence belongs to the ELL/occludin family. In terms of assembly, interacts with TJP1. Interacts with the ubiquitin ligase ITCH. Interacts (via C-terminal cytoplasmic domain) with LSR (via the cytoplasmic domain), ILDR1 and ILDR2; the interaction is required to recruit MARVELD2 to tricellular contacts. Post-translationally, ubiquitinated by ITCH; but this ubiquitination does not lead to proteasomal degradation. Polyubiquitinated at Lys-412 via 'Lys-63'-linked ubiquitin chains; deubiquitinated by USP53. In terms of processing, phosphorylated.

The protein resides in the cell membrane. It is found in the cell junction. It localises to the tight junction. In terms of biological role, plays a role in the formation of tricellular tight junctions and of epithelial barriers. Required for normal hearing via its role in the separation of the endolymphatic and perilymphatic spaces of the organ of Corti in the inner ear, and for normal survival of hair cells in the organ of Corti. This Homo sapiens (Human) protein is MARVEL domain-containing protein 2.